A 656-amino-acid polypeptide reads, in one-letter code: RNA-binding protein EWS (656 aa).

The interval 1-285 (MASTDYSTYS…GVYGQESGGF (285 aa)) is EAD (Gln/Pro/Thr-rich). 31 repeat units span residues 8–16 (TYSQAAAQQ), 17–27 (GYSAYTAQPTQ), 28–34 (GYAQTTQ), 35–42 (AYGQQSYG), 43–50 (TYGQPTDV), 51–59 (SYTQAQTTA), 60–68 (TYGQTAYAT), 69–75 (SYGQPPT), 76–84 (GYTTPTAPQ), 85–91 (AYSQPVQ), 92–110 (GYGT…TTQA), 111–116 (SYAAQS), 117–125 (AYGTQPAYP), 126–156 (AYGQ…SSTG), 157–163 (GYNQPSL), 164–170 (GYGQSNY), 171–177 (SYPQVPG), 178–188 (SYPMQPVTAPP), 189–193 (SYPPT), 194–201 (SYSSTQPT), 202–206 (SYDQS), 207–212 (SYSQQN), 213–218 (TYGQPS), 219–224 (SYGQQS), 225–230 (SYGQQS), 231–238 (SYGQQPPT), 239–245 (SYPPQTG), 246–252 (SYSQAPS), 253–259 (QYSQQSS), 260–276 (SYGQ…SSMG), and 277–285 (VYGQESGGF). The 31 X approximate tandem repeats stretch occupies residues 8 to 285 (TYSQAAAQQG…GVYGQESGGF (278 aa)). The span at 123–137 (AYPAYGQQPAATAPT) shows a compositional bias: low complexity. Residues 123 to 360 (AYPAYGQQPA…PVDPDEDSDN (238 aa)) are disordered. Over residues 143–172 (NKPTETSQPQSSTGGYNQPSLGYGQSNYSY) the composition is skewed to polar residues. Low complexity predominate over residues 192–266 (PTSYSSTQPT…QSSSYGQQSS (75 aa)). The region spanning 256 to 285 (QQSSSYGQQSSFRQDHPSSMGVYGQESGGF) is the IQ domain. S266 carries the phosphoserine; by PKC modification. An asymmetric dimethylarginine mark is found at R300, R302, R304, R309, R314, R317, and R321. The span at 308–335 (DRGGMSRGGRGGGRGGMGSAGERGGFNK) shows a compositional bias: gly residues. A compositionally biased stretch (low complexity) spans 336 to 350 (PGGPMDEGPDLDLGP). An RRM domain is found at 361–447 (SAIYVQGLND…SKLKVSLARK (87 aa)). Position 439 is an N6-acetyllysine (K439). Disordered stretches follow at residues 448–525 (KPPM…WQCP) and 547–656 (KPEG…DRPY). An asymmetric dimethylarginine mark is found at R455 and R464. At R471 the chain carries Asymmetric dimethylarginine; alternate. R471 carries the omega-N-methylarginine; alternate modification. Residues 472-490 (GGPGGPGGPGGPMGRMGGR) show a composition bias toward gly residues. Position 486 is an omega-N-methylarginine (R486). The residue at position 490 (R490) is an Asymmetric dimethylarginine; by PRMT8. Asymmetric dimethylarginine occurs at positions 494, 500, and 503. An Asymmetric dimethylarginine; alternate modification is found at R506. At R506 the chain carries Omega-N-methylarginine; alternate. The segment at 518–549 (RAGDWQCPNPGCGNQNFAWRTECNQCKAPKPE) adopts a RanBP2-type zinc-finger fold. The span at 551–560 (FLPPPFPPPG) shows a compositional bias: pro residues. Asymmetric dimethylarginine occurs at positions 563 and 565. Residues 566 to 591 (GGPGGMRGGRGGLMDRGGPGGMFRGG) are compositionally biased toward gly residues. R572 is modified (asymmetric dimethylarginine; alternate; by PRMT8). R572 is subject to Omega-N-methylarginine; alternate; by PRMT8. Asymmetric dimethylarginine occurs at positions 575, 581, 589, and 592. Basic and acidic residues predominate over residues 592 to 606 (RGGDRGGFRGGRGMD). At R596 the chain carries Asymmetric dimethylarginine; alternate; by PRMT8. Residue R596 is modified to Omega-N-methylarginine; alternate; by PRMT8. An Asymmetric dimethylarginine modification is found at R600. Position 603 is an asymmetric dimethylarginine; by PRMT8 (R603). R607 carries the asymmetric dimethylarginine; alternate; by PRMT8 modification. The residue at position 607 (R607) is an Omega-N-methylarginine; alternate; by PRMT8. Over residues 607 to 618 (RGGFGGGRRGGP) the composition is skewed to gly residues. R615 is subject to Asymmetric dimethylarginine; alternate. An Omega-N-methylarginine; alternate modification is found at R615. Asymmetric dimethylarginine is present on residues R633 and R636. The Nuclear localization signal signature appears at 639-656 (PGKMDKGEHRQERRDRPY). Over residues 641-656 (KMDKGEHRQERRDRPY) the composition is skewed to basic and acidic residues.

This sequence belongs to the RRM TET family. As to quaternary structure, binds POLR2C, SF1, calmodulin and RNA. Interacts with PTK2B/FAK2 and TDRD3. Binds calmodulin in the presence, but not in the absence, of calcium ion. Forms a complex with REC8, PRDM9, SYCP3 and SYCP1; complex formation is dependent of phosphorylated form of REC8 and requires PRDM9 bound to hotspot DNA; EWSR1 joins PRDM9 with the chromosomal axis through REC8. In terms of processing, phosphorylated; calmodulin-binding inhibits phosphorylation of Ser-266. Post-translationally, highly methylated on arginine residues. Methylation is mediated by PRMT1 and, at lower level by PRMT8. In terms of tissue distribution, ubiquitous.

The protein localises to the nucleus. It localises to the cytoplasm. The protein resides in the cell membrane. Binds to ssRNA containing the consensus sequence 5'-AGGUAA-3'. Might normally function as a transcriptional repressor. EWS-fusion-proteins (EFPS) may play a role in the tumorigenic process. They may disturb gene expression by mimicking, or interfering with the normal function of CTD-POLII within the transcription initiation complex. They may also contribute to an aberrant activation of the fusion protein target genes. In Homo sapiens (Human), this protein is RNA-binding protein EWS (EWSR1).